The primary structure comprises 62 residues: Temporin-1PLa (62 aa).

Residues 1–22 (MFTSKKSLLLLFFLGTINLSLC) form the signal peptide. Residues 23–45 (EEERDADEEERRDDPDEMNVEVE) constitute a propeptide that is removed on maturation. An Isoleucine amide modification is found at isoleucine 60.

In terms of tissue distribution, expressed by the skin glands.

It localises to the secreted. Antimicrobial activity against the Gram-positive bacterium S.aureus. The protein is Temporin-1PLa of Lithobates palustris (Pickerel frog).